Consider the following 267-residue polypeptide: Mediator of RNA polymerase II transcription subunit 8 (267 aa).

2 coiled-coil regions span residues 1-26 (MQRE…KNSL) and 116-160 (DVEE…EERE). The disordered stretch occupies residues 190–267 (GLSNRRPPGQ…KSASMHPYQR (78 aa)). The segment covering 227–245 (PPNQQQQHMAGVSMSQGSQ) has biased composition (polar residues).

It belongs to the Mediator complex subunit 8 family. In terms of assembly, component of the Mediator complex. May be part of a multisubunit E3 ubiquitin-protein ligase complex.

The protein resides in the nucleus. Its pathway is protein modification; protein ubiquitination. Functionally, component of the Mediator complex, a coactivator involved in the regulated transcription of nearly all RNA polymerase II-dependent genes. Mediator functions as a bridge to convey information from gene-specific regulatory proteins to the basal RNA polymerase II transcription machinery. Mediator is recruited to promoters by direct interactions with regulatory proteins and serves as a scaffold for the assembly of a functional preinitiation complex with RNA polymerase II and the general transcription factors. May play a role as a target recruitment subunit in E3 ubiquitin-protein ligase complexes and thus in ubiquitination and subsequent proteasomal degradation of target proteins. The chain is Mediator of RNA polymerase II transcription subunit 8 (med8) from Xenopus tropicalis (Western clawed frog).